Here is a 1347-residue protein sequence, read N- to C-terminus: Neurofascin (1347 aa).

The N-terminal stretch at 1–24 (MARQPPPPWVHAAFLLCLLSLGGA) is a signal peptide. Residues 25 to 1217 (IEIPMDPSIQ…NQADIATQGW (1193 aa)) lie on the Extracellular side of the membrane. 6 consecutive Ig-like C2-type domains span residues 41–137 (PTIT…LQVS), 143–230 (PKEN…NPFT), 244–332 (PSFM…ISVR), 337–424 (PYWL…AFVS), 429–517 (PPRM…VRLE), and 521–603 (PTRI…QDLA). 4 cysteine pairs are disulfide-bonded: Cys-63–Cys-118, Cys-162–Cys-213, Cys-268–Cys-316, and Cys-358–Cys-408. N-linked (GlcNAc...) asparagine glycosylation is present at Asn-305. Asn-409 and Asn-446 each carry an N-linked (GlcNAc...) asparagine glycan. Intrachain disulfides connect Cys-452–Cys-501 and Cys-543–Cys-592. The residue at position 481 (Tyr-481) is a Phosphotyrosine. Asn-483 carries N-linked (GlcNAc...) asparagine glycosylation. Position 485 is a phosphoserine (Ser-485). Fibronectin type-III domains are found at residues 630-725 (RPRD…TSGA), 730-823 (NPGD…SGED), 828-930 (APTE…TPEG), and 934-1030 (APRR…PNEA). The tract at residues 713 to 740 (PSLPSERYRTSGAPPESNPGDVKGEGTR) is disordered. 2 N-linked (GlcNAc...) asparagine glycosylation sites follow: Asn-752 and Asn-778. Residues 915–934 (GDGPRSETKEFTTPEGVPSA) form a disordered region. The span at 916 to 926 (DGPRSETKEFT) shows a compositional bias: basic and acidic residues. N-linked (GlcNAc...) asparagine glycans are attached at residues Asn-973 and Asn-988. Disordered stretches follow at residues 1011–1040 (TQVG…PTLP) and 1090–1111 (TTAA…TKIH). Positions 1024–1040 (PAPPNEATPTAAPPTLP) are enriched in pro residues. Low complexity predominate over residues 1090-1105 (TTAAATTTTESPPTTT). In terms of domain architecture, Fibronectin type-III 5 spans 1114–1206 (APDEQSIWNV…ITFMTSTAYT (93 aa)). Residues 1218-1238 (FIGLMCAIALLVLILLIVCFI) traverse the membrane as a helical segment. The Cytoplasmic segment spans residues 1239–1347 (KRSRGGKYPV…SPVNAIYSLA (109 aa)). The disordered stretch occupies residues 1248–1347 (VREKKDVPLG…SPVNAIYSLA (100 aa)). A compositionally biased stretch (acidic residues) spans 1261–1272 (PKEEDGSFDYSD). Residues Ser-1267, Ser-1281, Ser-1294, Ser-1297, Ser-1333, Ser-1334, and Ser-1338 each carry the phosphoserine modification. The segment covering 1278–1291 (LQGSQTSLDGTIKQ) has biased composition (polar residues).

Belongs to the immunoglobulin superfamily. L1/neurofascin/NgCAM family. As to quaternary structure, horseshoe-shaped homodimer. Probable constituent of a NFASC/NRCAM/ankyrin-G complex. Associates with the sodium channel beta-1 (SCN1B) and beta-3 (SCN3B) subunits. Interacts with GLDN/gliomedin. Interacts with MYOC.

It is found in the cell membrane. The protein localises to the cell junction. It localises to the paranodal septate junction. Its function is as follows. Cell adhesion, ankyrin-binding protein which may be involved in neurite extension, axonal guidance, synaptogenesis, myelination and neuron-glial cell interactions. This is Neurofascin (NFASC) from Homo sapiens (Human).